Here is a 117-residue protein sequence, read N- to C-terminus: 5-hydroxyisourate hydrolase (117 aa).

Substrate-binding residues include H7, R45, and Y114.

Belongs to the transthyretin family. 5-hydroxyisourate hydrolase subfamily. In terms of assembly, homotetramer.

It carries out the reaction 5-hydroxyisourate + H2O = 5-hydroxy-2-oxo-4-ureido-2,5-dihydro-1H-imidazole-5-carboxylate + H(+). Functionally, catalyzes the hydrolysis of 5-hydroxyisourate (HIU) to 2-oxo-4-hydroxy-4-carboxy-5-ureidoimidazoline (OHCU). The chain is 5-hydroxyisourate hydrolase from Ralstonia nicotianae (strain ATCC BAA-1114 / GMI1000) (Ralstonia solanacearum).